Consider the following 221-residue polypeptide: Translation initiation factor 6 (221 aa).

It belongs to the eIF-6 family.

In terms of biological role, binds to the 50S ribosomal subunit and prevents its association with the 30S ribosomal subunit to form the 70S initiation complex. This Nitrosopumilus maritimus (strain SCM1) protein is Translation initiation factor 6.